The primary structure comprises 516 residues: Cytochrome P450 1A1 (516 aa).

A mitochondrial targeting signal region spans residues 25-36 (FRPQVPKGLKSP). O-linked (GlcNAc) serine glycosylation occurs at Ser63. Phe220 is a substrate binding site. Cys453 lines the heme pocket.

It belongs to the cytochrome P450 family. As to quaternary structure, interacts with cytosolic chaperones HSP70 and HSP90; this interaction is required for initial targeting to mitochondria. Interacts (via mitochondrial targeting signal) with TOMM40 (via N-terminus); this interaction is required for translocation across the mitochondrial outer membrane. It depends on heme as a cofactor. In terms of tissue distribution, constitutively expressed in liver.

It is found in the endoplasmic reticulum membrane. It localises to the mitochondrion inner membrane. Its subcellular location is the microsome membrane. The protein localises to the cytoplasm. The enzyme catalyses an organic molecule + reduced [NADPH--hemoprotein reductase] + O2 = an alcohol + oxidized [NADPH--hemoprotein reductase] + H2O + H(+). It carries out the reaction estrone + reduced [NADPH--hemoprotein reductase] + O2 = 2-hydroxyestrone + oxidized [NADPH--hemoprotein reductase] + H2O + H(+). It catalyses the reaction estrone + reduced [NADPH--hemoprotein reductase] + O2 = 4-hydroxyestrone + oxidized [NADPH--hemoprotein reductase] + H2O + H(+). The catalysed reaction is estrone + reduced [NADPH--hemoprotein reductase] + O2 = 6alpha-hydroxyestrone + oxidized [NADPH--hemoprotein reductase] + H2O + H(+). The enzyme catalyses estrone + reduced [NADPH--hemoprotein reductase] + O2 = 15alpha-hydroxyestrone + oxidized [NADPH--hemoprotein reductase] + H2O + H(+). It carries out the reaction estrone + reduced [NADPH--hemoprotein reductase] + O2 = 16alpha-hydroxyestrone + oxidized [NADPH--hemoprotein reductase] + H2O + H(+). It catalyses the reaction 17beta-estradiol + reduced [NADPH--hemoprotein reductase] + O2 = 2-hydroxy-17beta-estradiol + oxidized [NADPH--hemoprotein reductase] + H2O + H(+). The catalysed reaction is 17beta-estradiol + reduced [NADPH--hemoprotein reductase] + O2 = 4-hydroxy-17beta-estradiol + oxidized [NADPH--hemoprotein reductase] + H2O + H(+). The enzyme catalyses 17beta-estradiol + reduced [NADPH--hemoprotein reductase] + O2 = 6alpha-hydroxy-17beta-estradiol + oxidized [NADPH--hemoprotein reductase] + H2O + H(+). It carries out the reaction 17beta-estradiol + reduced [NADPH--hemoprotein reductase] + O2 = 7alpha-hydroxy-17beta-estradiol + oxidized [NADPH--hemoprotein reductase] + H2O + H(+). It catalyses the reaction 17beta-estradiol + reduced [NADPH--hemoprotein reductase] + O2 = 15alpha-hydroxy-17beta-estradiol + oxidized [NADPH--hemoprotein reductase] + H2O + H(+). The catalysed reaction is (5Z,8Z,11Z)-eicosatrienoate + reduced [NADPH--hemoprotein reductase] + O2 = 19-hydroxy-(5Z,8Z,11Z)-eicosatrienoate + oxidized [NADPH--hemoprotein reductase] + H2O + H(+). The enzyme catalyses (5Z,8Z,11Z,14Z)-eicosatetraenoate + reduced [NADPH--hemoprotein reductase] + O2 = 16-hydroxy-(5Z,8Z,11Z,14Z)-eicosatetraenoate + oxidized [NADPH--hemoprotein reductase] + H2O + H(+). It carries out the reaction (5Z,8Z,11Z,14Z)-eicosatetraenoate + reduced [NADPH--hemoprotein reductase] + O2 = 17-hydroxy-(5Z,8Z,11Z,14Z)-eicosatetraenoate + oxidized [NADPH--hemoprotein reductase] + H2O + H(+). It catalyses the reaction (5Z,8Z,11Z,14Z)-eicosatetraenoate + reduced [NADPH--hemoprotein reductase] + O2 = 18-hydroxy-(5Z,8Z,11Z,14Z)-eicosatetraenoate + oxidized [NADPH--hemoprotein reductase] + H2O + H(+). The catalysed reaction is (5Z,8Z,11Z,14Z)-eicosatetraenoate + reduced [NADPH--hemoprotein reductase] + O2 = 19-hydroxy-(5Z,8Z,11Z,14Z)-eicosatetraenoate + oxidized [NADPH--hemoprotein reductase] + H2O + H(+). The enzyme catalyses (5Z,8Z,11Z,14Z,17Z)-eicosapentaenoate + reduced [NADPH--hemoprotein reductase] + O2 = 19-hydroxy-(5Z,8Z,11Z,14Z,17Z)-eicosapentaenoate + oxidized [NADPH--hemoprotein reductase] + H2O + H(+). It carries out the reaction (5Z,8Z,11Z,14Z)-eicosatetraenoate + reduced [NADPH--hemoprotein reductase] + O2 = (8R,9S)-epoxy-(5Z,11Z,14Z)-eicosatrienoate + oxidized [NADPH--hemoprotein reductase] + H2O + H(+). It catalyses the reaction (5Z,8Z,11Z,14Z)-eicosatetraenoate + reduced [NADPH--hemoprotein reductase] + O2 = (11R,12S)-epoxy-(5Z,8Z,14Z)-eicosatrienoate + oxidized [NADPH--hemoprotein reductase] + H2O + H(+). The catalysed reaction is (5Z,8Z,11Z,14Z)-eicosatetraenoate + reduced [NADPH--hemoprotein reductase] + O2 = (14S,15R)-epoxy-(5Z,8Z,11Z)-eicosatrienoate + oxidized [NADPH--hemoprotein reductase] + H2O + H(+). The enzyme catalyses (5Z,8Z,11Z,14Z)-eicosatetraenoate + reduced [NADPH--hemoprotein reductase] + O2 = (14R,15S)-epoxy-(5Z,8Z,11Z)-eicosatrienoate + oxidized [NADPH--hemoprotein reductase] + H2O + H(+). It carries out the reaction (5Z,8Z,11Z,14Z,17Z)-eicosapentaenoate + reduced [NADPH--hemoprotein reductase] + O2 = (17R,18S)-epoxy-(5Z,8Z,11Z,14Z)-eicosatetraenoate + oxidized [NADPH--hemoprotein reductase] + H2O + H(+). It catalyses the reaction (4Z,7Z,10Z,13Z,16Z,19Z)-docosahexaenoate + reduced [NADPH--hemoprotein reductase] + O2 = (19S,20R)-epoxy-(4Z,7Z,10Z,13Z,16Z)-docosapentaenoate + oxidized [NADPH--hemoprotein reductase] + H2O + H(+). The catalysed reaction is (4Z,7Z,10Z,13Z,16Z,19Z)-docosahexaenoate + reduced [NADPH--hemoprotein reductase] + O2 = (19R,20S)-epoxy-(4Z,7Z,10Z,13Z,16Z)-docosapentaenoate + oxidized [NADPH--hemoprotein reductase] + H2O + H(+). The enzyme catalyses all-trans-retinol + reduced [NADPH--hemoprotein reductase] + O2 = all-trans-retinal + oxidized [NADPH--hemoprotein reductase] + 2 H2O + H(+). It carries out the reaction all-trans-retinal + reduced [NADPH--hemoprotein reductase] + O2 = all-trans-retinoate + oxidized [NADPH--hemoprotein reductase] + H2O + 2 H(+). It catalyses the reaction (13S)-hydroperoxy-(9Z,11E)-octadecadienoate = 13-oxo-(9Z,11E)-octadecadienoate + H2O. The catalysed reaction is (12S)-hydroperoxy-(5Z,8Z,10E,14Z)-eicosatetraenoate = 12-oxo-(5Z,8Z,10E,14Z)-eicosatetraenoate + H2O. The enzyme catalyses (15S)-hydroperoxy-(5Z,8Z,11Z,13E)-eicosatetraenoate = 15-oxo-(5Z,8Z,11Z,13E)-eicosatetraenoate + H2O. It carries out the reaction (5S)-hydroperoxy-(6E,8Z,11Z,14Z)-eicosatetraenoate = 5-oxo-(6E,8Z,11Z,14Z)-eicosatetraenoate + H2O. It functions in the pathway steroid hormone biosynthesis. It participates in lipid metabolism; fatty acid metabolism. Its pathway is cofactor metabolism; retinol metabolism. Its function is as follows. A cytochrome P450 monooxygenase involved in the metabolism of various endogenous substrates, including fatty acids, steroid hormones and vitamins. Mechanistically, uses molecular oxygen inserting one oxygen atom into a substrate, and reducing the second into a water molecule, with two electrons provided by NADPH via cytochrome P450 reductase (CPR; NADPH-ferrihemoprotein reductase). Catalyzes the hydroxylation of carbon-hydrogen bonds. Exhibits high catalytic activity for the formation of hydroxyestrogens from estrone (E1) and 17beta-estradiol (E2), namely 2-hydroxy E1 and E2, as well as D-ring hydroxylated E1 and E2 at the C15alpha and C16alpha positions. Displays different regioselectivities for polyunsaturated fatty acids (PUFA) hydroxylation. Catalyzes the epoxidation of double bonds of certain PUFA. Converts arachidonic acid toward epoxyeicosatrienoic acid (EET) regioisomers, 8,9-, 11,12-, and 14,15-EET, that function as lipid mediators in the vascular system. Displays an absolute stereoselectivity in the epoxidation of eicosapentaenoic acid (EPA) producing the 17(R),18(S) enantiomer. May play an important role in all-trans retinoic acid biosynthesis in extrahepatic tissues. Catalyzes two successive oxidative transformation of all-trans retinol to all-trans retinal and then to the active form all-trans retinoic acid. May also participate in eicosanoids metabolism by converting hydroperoxide species into oxo metabolites (lipoxygenase-like reaction, NADPH-independent). The sequence is that of Cytochrome P450 1A1 (CYP1A1) from Cavia porcellus (Guinea pig).